The sequence spans 638 residues: Lactose permease (638 aa).

Residues 1–470 are permease; it reads MHNHKVSGKQ…AQVIEELKSK (470 aa). The next 12 membrane-spanning stretches (helical) occupy residues 27–47, 56–76, 94–114, 121–141, 166–186, 204–224, 261–281, 291–311, 320–340, 343–363, 395–415, and 429–449; these read FYGV…FSGL, IGLI…IDPI, WILI…TGIF, WILF…FYSL, LGAF…VPLV, WFAF…IVCF, LAYL…FYMY, FWVV…SFPV, WLFI…IFGH, VFLM…LVTV, FAGA…GMTG, and TFNM…IVVF. One can recognise a PTS EIIA type-1 domain in the interval 503 to 610; sequence SSVVDEDGKP…KDTIVIFYTQ (108 aa). The residue at position 558 (His558) is a Phosphohistidine; by HPr.

In the N-terminal section; belongs to the sodium:galactoside symporter (TC 2.A.2) family.

Its subcellular location is the cell membrane. Responsible for transport of beta-galactosides into the cell, with the concomitant uptake of protons (symport system), and also for transport of homologous and heterologous exchange of beta-galactosides. This Lactobacillus helveticus (Lactobacillus suntoryeus) protein is Lactose permease (lacS).